Reading from the N-terminus, the 180-residue chain is ATP-dependent protease subunit HslV (180 aa).

Residue Thr-7 is part of the active site. Na(+) is bound by residues Gly-165, Cys-168, and Thr-171.

Belongs to the peptidase T1B family. HslV subfamily. A double ring-shaped homohexamer of HslV is capped on each side by a ring-shaped HslU homohexamer. The assembly of the HslU/HslV complex is dependent on binding of ATP.

It is found in the cytoplasm. It carries out the reaction ATP-dependent cleavage of peptide bonds with broad specificity.. Allosterically activated by HslU binding. Functionally, protease subunit of a proteasome-like degradation complex believed to be a general protein degrading machinery. This Bacillus anthracis (strain A0248) protein is ATP-dependent protease subunit HslV.